The chain runs to 242 residues: Probable ABC transporter ATP-binding protein PEB1C (242 aa).

In terms of domain architecture, ABC transporter spans 2-236 (IELKNVNKYY…PKTERARLFL (235 aa)). 34–41 (GPSGSGKS) provides a ligand contact to ATP.

Belongs to the ABC transporter superfamily.

It localises to the cell inner membrane. Its function is as follows. Most probably involved, with PEB1, in a binding-protein-dependent transport system for an amino acid. Probably responsible for energy coupling to the transport system. The protein is Probable ABC transporter ATP-binding protein PEB1C (peb1C) of Campylobacter jejuni subsp. jejuni serotype O:2 (strain ATCC 700819 / NCTC 11168).